Consider the following 352-residue polypeptide: tRNA-specific 2-thiouridylase MnmA (352 aa).

ATP is bound by residues 7–14 (GLSGGVDS) and leucine 33. The Nucleophile role is filled by cysteine 94. Cysteines 94 and 193 form a disulfide. Position 119 (glycine 119) interacts with ATP. The tract at residues 143–145 (KDQ) is interaction with tRNA. The active-site Cysteine persulfide intermediate is cysteine 193. Residues 298–299 (RY) form an interaction with tRNA region.

It belongs to the MnmA/TRMU family.

The protein resides in the cytoplasm. The catalysed reaction is S-sulfanyl-L-cysteinyl-[protein] + uridine(34) in tRNA + AH2 + ATP = 2-thiouridine(34) in tRNA + L-cysteinyl-[protein] + A + AMP + diphosphate + H(+). In terms of biological role, catalyzes the 2-thiolation of uridine at the wobble position (U34) of tRNA, leading to the formation of s(2)U34. This chain is tRNA-specific 2-thiouridylase MnmA, found in Trichormus variabilis (strain ATCC 29413 / PCC 7937) (Anabaena variabilis).